A 1302-amino-acid polypeptide reads, in one-letter code: Serine-enriched protein (1302 aa).

One can recognise a BTB domain in the interval Cys40–Pro158. Disordered stretches follow at residues Ser325–Thr532, Pro575–Arg624, Phe648–Met685, Tyr701–Glu752, Phe834–Asp858, Phe1045–Asn1090, Phe1102–Glu1163, and Val1187–Pro1252. Over residues Arg337–Arg364 the composition is skewed to basic residues. Composition is skewed to polar residues over residues Leu378–Asn388, Ser410–Ala430, Ser437–Arg449, and Gly472–Ser487. Residues Lys589–Met623 show a composition bias toward basic and acidic residues. Residues Ser664–Ala680 are compositionally biased toward low complexity. Basic and acidic residues predominate over residues Lys713 to Lys723. The span at Asp736–Gly748 shows a compositional bias: polar residues. The span at Arg836–Asp855 shows a compositional bias: basic and acidic residues. Low complexity-rich tracts occupy residues Arg1047–Lys1056 and Ser1107–Ser1128. Polar residues predominate over residues Val1187–Thr1207. Low complexity predominate over residues Ala1226–Pro1252.

This Drosophila melanogaster (Fruit fly) protein is Serine-enriched protein (gprs).